The primary structure comprises 218 residues: NAD(P)H-quinone oxidoreductase subunit I (218 aa).

2 consecutive 4Fe-4S ferredoxin-type domains span residues 55–84 (GRIHYEFDKCIACEVCVRVCPINLPVVDWV) and 95–124 (RNYSIDFGACIFCGNCVEYCPTNCLSMTEE). 8 residues coordinate [4Fe-4S] cluster: Cys64, Cys67, Cys70, Cys74, Cys104, Cys107, Cys110, and Cys114. The interval 179–218 (LRAGKLPSQIIKELQADKSEEEGKNNSSDMVPNKLNSTNK) is disordered. The segment covering 192–202 (LQADKSEEEGK) has biased composition (basic and acidic residues). A compositionally biased stretch (polar residues) spans 203-218 (NNSSDMVPNKLNSTNK).

It belongs to the complex I 23 kDa subunit family. As to quaternary structure, NDH-1 is composed of at least 11 different subunits. Requires [4Fe-4S] cluster as cofactor.

The protein localises to the cellular thylakoid membrane. It carries out the reaction a plastoquinone + NADH + (n+1) H(+)(in) = a plastoquinol + NAD(+) + n H(+)(out). It catalyses the reaction a plastoquinone + NADPH + (n+1) H(+)(in) = a plastoquinol + NADP(+) + n H(+)(out). Functionally, NDH-1 shuttles electrons from an unknown electron donor, via FMN and iron-sulfur (Fe-S) centers, to quinones in the respiratory and/or the photosynthetic chain. The immediate electron acceptor for the enzyme in this species is believed to be plastoquinone. Couples the redox reaction to proton translocation, and thus conserves the redox energy in a proton gradient. This is NAD(P)H-quinone oxidoreductase subunit I from Prochlorococcus marinus (strain NATL2A).